We begin with the raw amino-acid sequence, 639 residues long: Muscarinic acetylcholine receptor M3 (639 aa).

Topologically, residues 1-115 (MLTHYQLCFQ…DPLGGHAVWQ (115 aa)) are extracellular. 6 N-linked (GlcNAc...) asparagine glycosylation sites follow: Asn16, Asn44, Asn45, Asn54, Asn97, and Asn101. A helical membrane pass occupies residues 116-139 (VVLIAFLTGIIALVTIIGNILVIV). At 140-152 (SFKVNKQLKTVNN) the chain is on the cytoplasmic side. Residues 153–173 (YFLLSLACADLIIGVISMNLF) traverse the membrane as a helical segment. Topologically, residues 174–190 (TTYIIMGHWALGNLACD) are extracellular. Cys189 and Cys269 form a disulfide bridge. The chain crosses the membrane as a helical span at residues 191–212 (LWLSIDYVASNASVMNLLVISF). Residues 213-232 (DRYFSITRPLTYRAKRTTKR) lie on the Cytoplasmic side of the membrane. A helical membrane pass occupies residues 233-255 (AGVMIGLAWIISFVLWAPAILFW). The Extracellular segment spans residues 256–277 (QYFVGKRTVPLDECFIQFLSEP). The chain crosses the membrane as a helical span at residues 278–300 (IITFGTAIAAFYLPVTIMSILYW). The Cytoplasmic portion of the chain corresponds to 301–542 (RIYKETEKRT…LIKEKKAAQT (242 aa)). Disordered stretches follow at residues 370–404 (PNTDQGDQEHSSSDSWNNNDAAASLENSASSDEED) and 431–471 (LPSS…GGSF). A compositionally biased stretch (low complexity) spans 382 to 393 (SDSWNNNDAAAS). The span at 443–454 (ELQKSDTDSQEK) shows a compositional bias: basic and acidic residues. Residues 543 to 563 (LSAILFAFIITWTPYNIMVLV) form a helical membrane-spanning segment. Over 564 to 576 (NTFCDCVPKTVWN) the chain is Extracellular. A helical transmembrane segment spans residues 577-596 (LGYWLCYINSTVNPVCYALC). The Cytoplasmic portion of the chain corresponds to 597–639 (NKMFRNTFKMLLLCQCDKRKRRKQQYQQRQSVIFHKRIPREAS).

Belongs to the G-protein coupled receptor 1 family. Muscarinic acetylcholine receptor subfamily. CHRM3 sub-subfamily. As to expression, brain, heart atria, and ventricle.

Its subcellular location is the cell membrane. The protein resides in the postsynaptic cell membrane. In terms of biological role, the muscarinic acetylcholine receptor mediates various cellular responses, including inhibition of adenylate cyclase, breakdown of phosphoinositides and modulation of potassium channels through the action of G proteins. Primary transducing effect is Pi turnover. The chain is Muscarinic acetylcholine receptor M3 (CHRM3) from Gallus gallus (Chicken).